Consider the following 266-residue polypeptide: 4-hydroxy-tetrahydrodipicolinate reductase (266 aa).

10 to 15 (GPRGRM) provides a ligand contact to NAD(+). NADP(+) is bound at residue Lys-38. NAD(+) is bound by residues 99–101 (GTT) and 125–128 (APNF). His-155 acts as the Proton donor/acceptor in catalysis. Residue His-156 coordinates (S)-2,3,4,5-tetrahydrodipicolinate. Lys-159 functions as the Proton donor in the catalytic mechanism. 165-166 (GT) serves as a coordination point for (S)-2,3,4,5-tetrahydrodipicolinate.

It belongs to the DapB family.

It localises to the cytoplasm. It catalyses the reaction (S)-2,3,4,5-tetrahydrodipicolinate + NAD(+) + H2O = (2S,4S)-4-hydroxy-2,3,4,5-tetrahydrodipicolinate + NADH + H(+). The enzyme catalyses (S)-2,3,4,5-tetrahydrodipicolinate + NADP(+) + H2O = (2S,4S)-4-hydroxy-2,3,4,5-tetrahydrodipicolinate + NADPH + H(+). It functions in the pathway amino-acid biosynthesis; L-lysine biosynthesis via DAP pathway; (S)-tetrahydrodipicolinate from L-aspartate: step 4/4. In terms of biological role, catalyzes the conversion of 4-hydroxy-tetrahydrodipicolinate (HTPA) to tetrahydrodipicolinate. The sequence is that of 4-hydroxy-tetrahydrodipicolinate reductase from Bacillus cytotoxicus (strain DSM 22905 / CIP 110041 / 391-98 / NVH 391-98).